We begin with the raw amino-acid sequence, 78 residues long: Large ribosomal subunit protein bL28 (78 aa).

It belongs to the bacterial ribosomal protein bL28 family.

The polypeptide is Large ribosomal subunit protein bL28 (Acidithiobacillus ferrooxidans (strain ATCC 23270 / DSM 14882 / CIP 104768 / NCIMB 8455) (Ferrobacillus ferrooxidans (strain ATCC 23270))).